A 910-amino-acid chain; its full sequence is MIHAWAIKRALCIFILINCVLKLERSLKVTWKSKRGFHTPVDGANGCEREWKRRGVFFSIRRGSNRKAARLRKAFRGVGTGGRPLFRGGKFIPLFLLRDCQRSGLNENQYKLTGRRCSSRLEVAPRRGNGLPFERRSGGAIGATGQLEDGGPDGGSPPGVQANTSRRSHSSGCSSSGSDGGGAPEHPQQNVRNFCILAHIDSGKSTLADRFLELTKTIKKKKMQDQFLDMMSLEREKGITIKLKAVRMNYQNYIFNLIDTPGHFDFYHEVKRSLSVCEGAILLIDGSKGIQSQTLNIFLELQKHNLKIIPVINKIDLNVCRLDEIETDLLSKFHFMKKDILHISAKYAQGVESLFQRIVSDIPCPAIKSNAFFRAIVFDSFYDQYKGVILIIKVLNGVLTKKTEVFFIQSEKTSIIQEVGYLTPDMKPTESIRQGDIAYVSCNMRKCDDVQISETIVSRDIVKMNAHRKLVVDLDRLGGERTGEAHTNVTRCGVESLRGAAPPVEMHTEREIHLEQMAASKVDVSYPVVFCNIYSVSDKQANELEAALNKLKLNDASFSFKPDVCETLGKGFKCGFNGLLHLNIIQERIKREYGVETIVTAPSVNYLVRVKERGIDKQLRERLVDARFDIAHVNVAAGGSGDGRADGSADGSADGSADGSGDSSAHGSSDRRGAGCARGSDDIIGNNPPEGLYYMTSNVNDIPQKNYVQGIYEPYVRTSIVTPEEYQKHIMAECFQRRGIFIKKENINSHVIFHFDMPLSEILINFLDQIKSCTKGYGSMSYESYITYRESDLHKINIYVNNRSIDSLSFLAHKLNYQEKGKRIVLKLKEMIKPHQFLVVIQAGVGTRIFASERINPIRKNVTAKCYGGDITRRRKLLEKQSAGKKKMFSIGKVKLPPNMFTKLFDLKAQ.

A disordered region spans residues 126–188 (RRGNGLPFER…DGGGAPEHPQ (63 aa)). In terms of domain architecture, tr-type G spans 189–366 (QNVRNFCILA…RIVSDIPCPA (178 aa)). GTP contacts are provided by residues 198-205 (AHIDSGKS), 259-263 (DTPGH), and 313-316 (NKID). Positions 639–683 (GSGDGRADGSADGSADGSADGSGDSSAHGSSDRRGAGCARGSDDI) are disordered. Low complexity predominate over residues 646 to 667 (DGSADGSADGSADGSGDSSAHG).

This sequence belongs to the TRAFAC class translation factor GTPase superfamily. Classic translation factor GTPase family. LepA subfamily.

The protein resides in the mitochondrion inner membrane. The enzyme catalyses GTP + H2O = GDP + phosphate + H(+). In terms of biological role, promotes mitochondrial protein synthesis. May act as a fidelity factor of the translation reaction, by catalyzing a one-codon backward translocation of tRNAs on improperly translocated ribosomes. Binds to mitochondrial ribosomes in a GTP-dependent manner. The polypeptide is Translation factor GUF1 homolog, mitochondrial (Plasmodium vivax (strain Salvador I)).